A 293-amino-acid chain; its full sequence is Protein Pat (293 aa).

The BEN domain maps to 187-287 (LPDIILNPLD…LLLRTRQDRA (101 aa)).

As to quaternary structure, interacts with poc1b. In terms of tissue distribution, an mRNA and protein component of germ plasm and primordial germ cells (PGCs) throughout oogenesis and early development, being first localized to the granulo-fibrillar material (GFM) of the mitochondrial cloud in stage I and II oocytes and to the periphery of mature germinal granules both in oocytes and in embryos. Shows some somatic expression including the ectodermal cells of tailbud embryos. In adults, only expressed in ovaries.

Its subcellular location is the cytoplasm. It localises to the nucleus. Its function is as follows. Probably plays a role in germ plasm formation, positioning and maintenance. This is Protein Pat from Xenopus laevis (African clawed frog).